The primary structure comprises 86 residues: Gas vesicle protein M (86 aa).

It belongs to the gas vesicle GvpA family. GvpF to GvpM interact with each other in vitro, and may form multi-subunit complex(es). Might interact with GvpA.

Its subcellular location is the gas vesicle. Proteins GvpF to GvpM might be involved in nucleating gas vesicle formation. A minor component of the gas vesicle. Gas vesicles are small, hollow, gas filled protein structures found in some microorganisms. They allow positioning of halobacteria at the optimal depth for growth in the poorly aerated, shallow brine pools of their habitat. In terms of biological role, expression of a 9.5 kb mc-vac DNA fragment containing 2 divergently transcribed regions (gvpD-gvpE-gvpF-gvpG-gvpH-gvpI-gvpJ-gvpK-gvpL-gvpM and gvpA-gvpC-gvpN-gvpO) allows H.volcanii to produce gas vesicles. The sequence is that of Gas vesicle protein M from Haloferax mediterranei (strain ATCC 33500 / DSM 1411 / JCM 8866 / NBRC 14739 / NCIMB 2177 / R-4) (Halobacterium mediterranei).